A 113-amino-acid chain; its full sequence is Small ribosomal subunit protein uS17 (113 aa).

The protein belongs to the universal ribosomal protein uS17 family. In terms of assembly, part of the 30S ribosomal subunit.

In terms of biological role, one of the primary rRNA binding proteins, it binds specifically to the 5'-end of 16S ribosomal RNA. The chain is Small ribosomal subunit protein uS17 from Sulfurisphaera tokodaii (strain DSM 16993 / JCM 10545 / NBRC 100140 / 7) (Sulfolobus tokodaii).